The following is a 103-amino-acid chain: Co-chaperonin GroES (103 aa).

This sequence belongs to the GroES chaperonin family. Heptamer of 7 subunits arranged in a ring. Interacts with the chaperonin GroEL.

The protein resides in the cytoplasm. Functionally, together with the chaperonin GroEL, plays an essential role in assisting protein folding. The GroEL-GroES system forms a nano-cage that allows encapsulation of the non-native substrate proteins and provides a physical environment optimized to promote and accelerate protein folding. GroES binds to the apical surface of the GroEL ring, thereby capping the opening of the GroEL channel. The chain is Co-chaperonin GroES from Synechocystis sp. (strain ATCC 27184 / PCC 6803 / Kazusa).